The chain runs to 194 residues: Ion-translocating oxidoreductase complex subunit A (194 aa).

The next 6 helical transmembrane spans lie at 4–24 (LALILVSAILVNNFVLVQFLG), 39–59 (IGLSLATTFVLTLAAICSYIL), 71–91 (FLRTIGFILVIAVVVQFTEML), 102–122 (VLGIFLPLITTNCIVLGVALL), 135–155 (TTQGFGAGLGFSLVLVLFAAL), and 172–192 (AIGMITAGLMSLAFMGFSGLI).

It belongs to the NqrDE/RnfAE family. The complex is composed of six subunits: RnfA, RnfB, RnfC, RnfD, RnfE and RnfG.

The protein resides in the cell inner membrane. In terms of biological role, part of a membrane-bound complex that couples electron transfer with translocation of ions across the membrane. In Pseudomonas paraeruginosa (strain DSM 24068 / PA7) (Pseudomonas aeruginosa (strain PA7)), this protein is Ion-translocating oxidoreductase complex subunit A.